A 265-amino-acid polypeptide reads, in one-letter code: Upstream stimulatory factor (265 aa).

A compositionally biased stretch (basic and acidic residues) spans 1–18 (MDVQDHTLDQGPQDKDKD). Disordered regions lie at residues 1–21 (MDVQDHTLDQGPQDKDKDLEE) and 119–149 (ASAAIPGDGAGPASGGEQQPGITQPSGAAGG). Residues 134-144 (GEQQPGITQPS) are compositionally biased toward polar residues. The bHLH domain occupies 190 to 245 (RRRATHNEVERRRRDKINNWIVKLSKIIPDCNIDHSKQGQSKGGILTKTCDYIHDL).

As to quaternary structure, efficient DNA binding requires dimerization with another bHLH protein. Binds DNA as a homodimer or a heterodimer. Enriched in ectodermal tissue.

The protein localises to the nucleus. Functionally, may act as a transcription factor which recognizes the CACGTG motif on SPEC gene promoters. This is Upstream stimulatory factor from Strongylocentrotus purpuratus (Purple sea urchin).